The chain runs to 145 residues: D-aminoacyl-tRNA deacylase (145 aa).

A Gly-cisPro motif, important for rejection of L-amino acids motif is present at residues 137 to 138 (GP).

Belongs to the DTD family. As to quaternary structure, homodimer.

It localises to the cytoplasm. The enzyme catalyses glycyl-tRNA(Ala) + H2O = tRNA(Ala) + glycine + H(+). The catalysed reaction is a D-aminoacyl-tRNA + H2O = a tRNA + a D-alpha-amino acid + H(+). Its function is as follows. An aminoacyl-tRNA editing enzyme that deacylates mischarged D-aminoacyl-tRNAs. Also deacylates mischarged glycyl-tRNA(Ala), protecting cells against glycine mischarging by AlaRS. Acts via tRNA-based rather than protein-based catalysis; rejects L-amino acids rather than detecting D-amino acids in the active site. By recycling D-aminoacyl-tRNA to D-amino acids and free tRNA molecules, this enzyme counteracts the toxicity associated with the formation of D-aminoacyl-tRNA entities in vivo and helps enforce protein L-homochirality. This is D-aminoacyl-tRNA deacylase from Cronobacter sakazakii (strain ATCC BAA-894) (Enterobacter sakazakii).